The primary structure comprises 244 residues: Eukaryotic translation initiation factor 6 (244 aa).

This sequence belongs to the eIF-6 family. Monomer. Associates with the 60S ribosomal subunit.

The protein resides in the cytoplasm. It is found in the nucleus. Its subcellular location is the nucleolus. Its function is as follows. Binds to the 60S ribosomal subunit and prevents its association with the 40S ribosomal subunit to form the 80S initiation complex in the cytoplasm. May also be involved in ribosome biogenesis. This is Eukaryotic translation initiation factor 6 (eif6) from Dictyostelium discoideum (Social amoeba).